A 356-amino-acid chain; its full sequence is UDP-N-acetylglucosamine--N-acetylmuramyl-(pentapeptide) pyrophosphoryl-undecaprenol N-acetylglucosamine transferase (356 aa).

Residues 10–12 (TAG), asparagine 123, arginine 159, serine 193, isoleucine 240, and glutamine 284 each bind UDP-N-acetyl-alpha-D-glucosamine.

The protein belongs to the glycosyltransferase 28 family. MurG subfamily.

It is found in the cell membrane. The enzyme catalyses di-trans,octa-cis-undecaprenyl diphospho-N-acetyl-alpha-D-muramoyl-L-alanyl-D-glutamyl-meso-2,6-diaminopimeloyl-D-alanyl-D-alanine + UDP-N-acetyl-alpha-D-glucosamine = di-trans,octa-cis-undecaprenyl diphospho-[N-acetyl-alpha-D-glucosaminyl-(1-&gt;4)]-N-acetyl-alpha-D-muramoyl-L-alanyl-D-glutamyl-meso-2,6-diaminopimeloyl-D-alanyl-D-alanine + UDP + H(+). It functions in the pathway cell wall biogenesis; peptidoglycan biosynthesis. Cell wall formation. Catalyzes the transfer of a GlcNAc subunit on undecaprenyl-pyrophosphoryl-MurNAc-pentapeptide (lipid intermediate I) to form undecaprenyl-pyrophosphoryl-MurNAc-(pentapeptide)GlcNAc (lipid intermediate II). This is UDP-N-acetylglucosamine--N-acetylmuramyl-(pentapeptide) pyrophosphoryl-undecaprenol N-acetylglucosamine transferase from Corynebacterium glutamicum (strain R).